The following is a 359-amino-acid chain: Peptide chain release factor 1 (359 aa).

Gln233 bears the N5-methylglutamine mark.

The protein belongs to the prokaryotic/mitochondrial release factor family. Post-translationally, methylated by PrmC. Methylation increases the termination efficiency of RF1.

It localises to the cytoplasm. Functionally, peptide chain release factor 1 directs the termination of translation in response to the peptide chain termination codons UAG and UAA. The protein is Peptide chain release factor 1 of Orientia tsutsugamushi (strain Boryong) (Rickettsia tsutsugamushi).